The sequence spans 617 residues: Chaperone protein HscA homolog (617 aa).

The protein belongs to the heat shock protein 70 family.

Functionally, chaperone involved in the maturation of iron-sulfur cluster-containing proteins. Has a low intrinsic ATPase activity which is markedly stimulated by HscB. The chain is Chaperone protein HscA homolog from Vibrio campbellii (strain ATCC BAA-1116).